The following is a 297-amino-acid chain: Bifunctional protein FolD 2 (297 aa).

Residues 177 to 179, Ile-202, and Ile-243 each bind NADP(+); that span reads GKS.

The protein belongs to the tetrahydrofolate dehydrogenase/cyclohydrolase family. As to quaternary structure, homodimer.

It carries out the reaction (6R)-5,10-methylene-5,6,7,8-tetrahydrofolate + NADP(+) = (6R)-5,10-methenyltetrahydrofolate + NADPH. It catalyses the reaction (6R)-5,10-methenyltetrahydrofolate + H2O = (6R)-10-formyltetrahydrofolate + H(+). The protein operates within one-carbon metabolism; tetrahydrofolate interconversion. Catalyzes the oxidation of 5,10-methylenetetrahydrofolate to 5,10-methenyltetrahydrofolate and then the hydrolysis of 5,10-methenyltetrahydrofolate to 10-formyltetrahydrofolate. The sequence is that of Bifunctional protein FolD 2 from Rhizorhabdus wittichii (strain DSM 6014 / CCUG 31198 / JCM 15750 / NBRC 105917 / EY 4224 / RW1) (Sphingomonas wittichii).